Reading from the N-terminus, the 415-residue chain is Casein kinase I isoform delta (415 aa).

The region spanning 9 to 277 is the Protein kinase domain; sequence YRLGRKIGSG…YLRQLFRNLF (269 aa). ATP contacts are provided by residues 15–23 and K38; that span reads IGSGSFGDI. The Proton acceptor role is filled by D128. The tract at residues 278–364 is centrosomal localization signal (CLS); the sequence is HRQGFSYDYV…TSPRPVSGME (87 aa). Over residues 301 to 315 the composition is skewed to basic and acidic residues; it reads ADDAERERRDREERL. The segment at 301 to 415 is disordered; sequence ADDAERERRD…SSGLQSVVHR (115 aa). The segment at 317–342 is autoinhibitory; that stretch reads HSRNPATRGLPSTASGRLRGTQEVAP. Residues S328 and S331 each carry the phosphoserine modification. Residues 347 to 358 show a composition bias toward polar residues; that stretch reads TPTSHTANTSPR. Residue S370 is modified to Phosphoserine. R375 carries the post-translational modification Omega-N-methylarginine. A compositionally biased stretch (polar residues) spans 380-400; it reads NISSSDLTGRQDTSRMSTSQI. S382, S383, S384, S407, and S411 each carry phosphoserine.

The protein belongs to the protein kinase superfamily. CK1 Ser/Thr protein kinase family. Casein kinase I subfamily. Monomer. Component of the circadian core oscillator, which includes the CRY proteins, CLOCK, or NPAS2, ARTNL/BMAL1 or ARTNL2/BMAL2, CSNK1D and/or CSNK1E, TIMELESS and the PER proteins. Interacts with DNMT1 and MAP1A. Interacts directly with PER1 and PER2 which may lead to their degradation. Interacts with MAPT/TAU, SNAPIN, DBNDD2, AIB1/NCOA3 and ESR1. Interacts with AKAP9/AKAP450; this interaction promotes centrosomal subcellular location. Binds to tubulins in mitotic cells upon DNA damage. Interacts with GJA1. Interacts with DDX3X; this interaction enhances CSNK1D kinase activity in vitro, but it is unclear whether this interaction is physiologically relevant. Interacts with FAM83A, FAM83B, FAM83E and FAM83H (via DUF1669). In terms of processing, autophosphorylated on serine and threonine residues; this autophosphorylation represses activity. Reactivated by phosphatase-mediated dephosphorylation. May be dephosphorylated by PP1.

It is found in the cytoplasm. The protein resides in the nucleus. Its subcellular location is the cytoskeleton. It localises to the microtubule organizing center. The protein localises to the centrosome. It is found in the perinuclear region. The protein resides in the cell membrane. Its subcellular location is the spindle. It localises to the golgi apparatus. It catalyses the reaction L-seryl-[protein] + ATP = O-phospho-L-seryl-[protein] + ADP + H(+). It carries out the reaction L-threonyl-[protein] + ATP = O-phospho-L-threonyl-[protein] + ADP + H(+). The catalysed reaction is L-seryl-[tau protein] + ATP = O-phospho-L-seryl-[tau protein] + ADP + H(+). The enzyme catalyses L-threonyl-[tau protein] + ATP = O-phospho-L-threonyl-[tau protein] + ADP + H(+). Its activity is regulated as follows. Drug-mediated inhibition leads to a delay of the oscillations with the magnitude of this effect dependent upon the timing of drug administration. Inhibited by phosphorylation. Exhibits substrate-dependent heparin activation. In terms of biological role, essential serine/threonine-protein kinase that regulates diverse cellular growth and survival processes including Wnt signaling, DNA repair and circadian rhythms. It can phosphorylate a large number of proteins. Casein kinases are operationally defined by their preferential utilization of acidic proteins such as caseins as substrates. Phosphorylates connexin-43/GJA1, MAP1A, SNAPIN, MAPT/TAU, TOP2A, DCK, HIF1A, EIF6, p53/TP53, DVL2, DVL3, ESR1, AIB1/NCOA3, DNMT1, PKD2, YAP1, PER1 and PER2. Central component of the circadian clock. In balance with PP1, determines the circadian period length through the regulation of the speed and rhythmicity of PER1 and PER2 phosphorylation. Controls PER1 and PER2 nuclear transport and degradation. YAP1 phosphorylation promotes its SCF(beta-TRCP) E3 ubiquitin ligase-mediated ubiquitination and subsequent degradation. DNMT1 phosphorylation reduces its DNA-binding activity. Phosphorylation of ESR1 and AIB1/NCOA3 stimulates their activity and coactivation. Phosphorylation of DVL2 and DVL3 regulates WNT3A signaling pathway that controls neurite outgrowth. Phosphorylates NEDD9/HEF1. EIF6 phosphorylation promotes its nuclear export. Triggers down-regulation of dopamine receptors in the forebrain. Activates DCK in vitro by phosphorylation. TOP2A phosphorylation favors DNA cleavable complex formation. May regulate the formation of the mitotic spindle apparatus in extravillous trophoblast. Modulates connexin-43/GJA1 gap junction assembly by phosphorylation. Probably involved in lymphocyte physiology. Regulates fast synaptic transmission mediated by glutamate. This is Casein kinase I isoform delta (CSNK1D) from Bos taurus (Bovine).